We begin with the raw amino-acid sequence, 178 residues long: MAARRIAQSSINWSALAERVPANQKSSFGAFKTKSDIYVRAVLANPECPPQIDWANYKKLVPVAGLVDSFQKQYEALKVPYPQDKVSSQVDAEIKASQSEIDAYKKASEQRIQNYQKEIAHLKSLLPYDQMTMEDYRDAFPDSALDPLNKPTFWPHTPEEQVGYKSKEQLEAEAQGHH.

The tract at residues 149–178 is disordered; that stretch reads NKPTFWPHTPEEQVGYKSKEQLEAEAQGHH. Residues 165-178 show a composition bias toward basic and acidic residues; it reads KSKEQLEAEAQGHH.

It belongs to the ATPase d subunit family. In terms of assembly, F-type ATPases have 2 components, CF(1) - the catalytic core - and CF(0) - the membrane proton channel. CF(0) seems to have nine subunits: a, b, c, d, e, f, g, F6 and 8 (or A6L).

It localises to the mitochondrion. Its subcellular location is the mitochondrion inner membrane. Functionally, mitochondrial membrane ATP synthase (F(1)F(0) ATP synthase or Complex V) produces ATP from ADP in the presence of a proton gradient across the membrane which is generated by electron transport complexes of the respiratory chain. F-type ATPases consist of two structural domains, F(1) - containing the extramembraneous catalytic core, and F(0) - containing the membrane proton channel, linked together by a central stalk and a peripheral stalk. During catalysis, ATP synthesis in the catalytic domain of F(1) is coupled via a rotary mechanism of the central stalk subunits to proton translocation. Part of the complex F(0) domain and the peripheric stalk, which acts as a stator to hold the catalytic alpha(3)beta(3) subcomplex and subunit a/ATP6 static relative to the rotary elements. The protein is ATP synthase subunit d, mitochondrial of Drosophila melanogaster (Fruit fly).